A 588-amino-acid polypeptide reads, in one-letter code: Endogenous retrovirus group K member 7 Env polyprotein (588 aa).

A fusion peptide region spans residues 355–375 (FIFTLIAVIMGLIAVTATAAV). A helical membrane pass occupies residues 522–542 (IGSTTIINLILILVCLFCLLL).

It belongs to the beta type-B retroviral envelope protein family. HERV class-II K(HML-2) env subfamily. In terms of assembly, the surface (SU) and transmembrane (TM) proteins form a heterodimer. SU and TM are attached by noncovalent interactions or by a labile interchain disulfide bond. Post-translationally, specific enzymatic cleavages in vivo yield the mature SU and TM proteins. Expressed in lung, placenta, testis and peripheral blood lymphocytes.

It localises to the virion. The protein localises to the cell membrane. Its function is as follows. Retroviral envelope proteins mediate receptor recognition and membrane fusion during early infection. Endogenous envelope proteins may have kept, lost or modified their original function during evolution. SU mediates receptor recognition. In terms of biological role, TM anchors the envelope heterodimer to the viral membrane through one transmembrane domain. The other hydrophobic domain, called fusion peptide, mediates fusion of the viral membrane with the target cell membrane. This chain is Endogenous retrovirus group K member 7 Env polyprotein (ERVK-7), found in Homo sapiens (Human).